The primary structure comprises 156 residues: Ribosome maturation factor RimP (156 aa).

It belongs to the RimP family.

The protein resides in the cytoplasm. In terms of biological role, required for maturation of 30S ribosomal subunits. The polypeptide is Ribosome maturation factor RimP (Oenococcus oeni (strain ATCC BAA-331 / PSU-1)).